Here is a 743-residue protein sequence, read N- to C-terminus: FHF complex subunit HOOK-interacting protein 2B (743 aa).

Residues 186–219 are disordered; it reads CGEPTALPKDTTSHGDKDCSHDGAPARPQLDGES. Residues 196-206 are compositionally biased toward basic and acidic residues; it reads TTSHGDKDCSH.

Belongs to the FHIP family. As to expression, expressed in liver.

Its function is as follows. Able to activate MAPK/ERK and TGFB signaling pathways. May regulate the activity of genes involved in intestinal barrier function and immunoprotective inflammation. May play a role in cell proliferation. In Homo sapiens (Human), this protein is FHF complex subunit HOOK-interacting protein 2B.